Here is a 268-residue protein sequence, read N- to C-terminus: Phosphatidylglycerol--prolipoprotein diacylglyceryl transferase (268 aa).

The next 7 helical transmembrane spans lie at 10–30 (VALA…LIGI), 56–76 (LVFW…VLFY), 92–112 (WKGG…ALWF), 120–140 (FFEL…AGRI), 174–194 (PSQL…LWLF), 202–222 (MAVS…VEFV), and 236–256 (WLTQ…VLIW). Position 139 (R139) interacts with a 1,2-diacyl-sn-glycero-3-phospho-(1'-sn-glycerol).

This sequence belongs to the Lgt family.

It is found in the cell inner membrane. The enzyme catalyses L-cysteinyl-[prolipoprotein] + a 1,2-diacyl-sn-glycero-3-phospho-(1'-sn-glycerol) = an S-1,2-diacyl-sn-glyceryl-L-cysteinyl-[prolipoprotein] + sn-glycerol 1-phosphate + H(+). It functions in the pathway protein modification; lipoprotein biosynthesis (diacylglyceryl transfer). Its function is as follows. Catalyzes the transfer of the diacylglyceryl group from phosphatidylglycerol to the sulfhydryl group of the N-terminal cysteine of a prolipoprotein, the first step in the formation of mature lipoproteins. This is Phosphatidylglycerol--prolipoprotein diacylglyceryl transferase from Pseudomonas putida (strain ATCC 47054 / DSM 6125 / CFBP 8728 / NCIMB 11950 / KT2440).